The following is a 255-amino-acid chain: Folate receptor beta (255 aa).

A signal peptide spans 1–16 (MVWKWMPLLLLLVCVA). Intrachain disulfides connect Cys31–Cys59, Cys51–Cys99, Cys60–Cys103, Cys83–Cys169, Cys90–Cys140, Cys129–Cys203, Cys133–Cys183, and Cys146–Cys163. Residues Asp97 and Tyr101 each contribute to the folate site. An N-linked (GlcNAc...) asparagine glycan is attached at Asn115. Folate contacts are provided by residues 118–122 (WRKER), 151–156 (HRGWDW), and Ser190. N-linked (GlcNAc...) asparagine glycosylation occurs at Asn195. The GPI-anchor amidated asparagine moiety is linked to residue Asn230. Residues 231–255 (AGEMLHGTGGLLLSLALMLQLWLLG) constitute a propeptide, removed in mature form.

This sequence belongs to the folate receptor family. N-glycosylated. Expressed in placenta and hematopoietic cells. Expression is increased in malignant tissues.

It localises to the cell membrane. The protein localises to the secreted. Its function is as follows. Binds to folate and reduced folic acid derivatives and mediates delivery of 5-methyltetrahydrofolate and folate analogs into the interior of cells. Has high affinity for folate and folic acid analogs at neutral pH. Exposure to slightly acidic pH after receptor endocytosis triggers a conformation change that strongly reduces its affinity for folates and mediates their release. The protein is Folate receptor beta (FOLR2) of Homo sapiens (Human).